The sequence spans 957 residues: Glycine dehydrogenase (decarboxylating) (957 aa).

Position 702 is an N6-(pyridoxal phosphate)lysine (Lys702).

This sequence belongs to the GcvP family. As to quaternary structure, the glycine cleavage system is composed of four proteins: P, T, L and H. Pyridoxal 5'-phosphate is required as a cofactor.

The catalysed reaction is N(6)-[(R)-lipoyl]-L-lysyl-[glycine-cleavage complex H protein] + glycine + H(+) = N(6)-[(R)-S(8)-aminomethyldihydrolipoyl]-L-lysyl-[glycine-cleavage complex H protein] + CO2. The glycine cleavage system catalyzes the degradation of glycine. The P protein binds the alpha-amino group of glycine through its pyridoxal phosphate cofactor; CO(2) is released and the remaining methylamine moiety is then transferred to the lipoamide cofactor of the H protein. In Bradyrhizobium sp. (strain BTAi1 / ATCC BAA-1182), this protein is Glycine dehydrogenase (decarboxylating).